A 257-amino-acid polypeptide reads, in one-letter code: Acetylglutamate kinase (257 aa).

Substrate-binding positions include 43-44 (GG), Arg-65, and Asn-157. Residues 180–185 (DISSIL) and 208–210 (IIT) each bind ATP.

Belongs to the acetylglutamate kinase family. ArgB subfamily. As to quaternary structure, homodimer.

It is found in the cytoplasm. The enzyme catalyses N-acetyl-L-glutamate + ATP = N-acetyl-L-glutamyl 5-phosphate + ADP. It participates in amino-acid biosynthesis; L-arginine biosynthesis; N(2)-acetyl-L-ornithine from L-glutamate: step 2/4. Functionally, catalyzes the ATP-dependent phosphorylation of N-acetyl-L-glutamate. This is Acetylglutamate kinase from Buchnera aphidicola subsp. Acyrthosiphon pisum (strain Tuc7).